Here is a 205-residue protein sequence, read N- to C-terminus: Guanylate kinase (205 aa).

One can recognise a Guanylate kinase-like domain in the interval Gly7–Asn185. Ala14–Thr21 provides a ligand contact to ATP.

The protein belongs to the guanylate kinase family.

The protein localises to the cytoplasm. The catalysed reaction is GMP + ATP = GDP + ADP. Essential for recycling GMP and indirectly, cGMP. The protein is Guanylate kinase of Neisseria gonorrhoeae (strain ATCC 700825 / FA 1090).